A 231-amino-acid chain; its full sequence is Glutathione-specific gamma-glutamylcyclotransferase (231 aa).

49 to 54 (IFGYGS) provides a ligand contact to substrate. Glu127 serves as the catalytic Proton acceptor.

It belongs to the gamma-glutamylcyclotransferase family. ChaC subfamily.

It carries out the reaction glutathione = L-cysteinylglycine + 5-oxo-L-proline. Functionally, catalyzes the cleavage of glutathione into 5-oxo-L-proline and a Cys-Gly dipeptide. Acts specifically on glutathione, but not on other gamma-glutamyl peptides. This is Glutathione-specific gamma-glutamylcyclotransferase from Escherichia coli (strain K12).